Reading from the N-terminus, the 159-residue chain is C-type lectin 1 (159 aa).

An N-terminal signal peptide occupies residues 1–23 (MGRFIFISFGLLVVFFFLSGAKG). Intrachain disulfides connect Cys-26–Cys-37, Cys-54–Cys-155, Cys-61–Cys-157, and Cys-130–Cys-147. Residues 33–156 (MYGLCYKIFD…CKVKNAFLCQ (124 aa)) enclose the C-type lectin domain. Asn-118 is a glycosylation site (N-linked (GlcNAc...) asparagine). A Sugar-binding motif is present at residues 119–121 (LTD). Ca(2+)-binding residues include Asp-121, Asp-127, and Asn-143.

The protein belongs to the true venom lectin family. In terms of assembly, homodimer; disulfide-linked. As to expression, expressed by the venom gland.

Its subcellular location is the secreted. Its function is as follows. Lectin which recognizes specific carbohydrate structures and agglutinates a variety of animal cells by binding to cell-surface glycoproteins and glycolipids. May be a calcium-dependent lectin. The protein is C-type lectin 1 of Bitis gabonica (Gaboon adder).